We begin with the raw amino-acid sequence, 370 residues long: uncharacterized protein (370 aa).

Residues 1 to 27 form the signal peptide; the sequence is MSSAANEGCVYLFIVVLRLSSFSCVNS. Asn59, Asn98, and Asn126 each carry an N-linked (GlcNAc...) asparagine glycan. Disordered regions lie at residues 81 to 101 and 123 to 167; these read SRSH…NTTA and LSEN…CHQP. Residues 139–148 show a composition bias toward acidic residues; sequence HDDDDDDDLE. N-linked (GlcNAc...) asparagine glycosylation is found at Asn171, Asn221, Asn230, and Asn262.

This is an uncharacterized protein from Saccharomyces cerevisiae (strain ATCC 204508 / S288c) (Baker's yeast).